A 467-amino-acid chain; its full sequence is Protection of telomeres protein 1a (467 aa).

The protein belongs to the telombin family. In terms of assembly, component of the telomerase holoenzyme complex at least composed of TERT, CBF5 and POT1a. The RNA molecule associated to the telomerase complex, and providing a template for telomeric DNA synthesis, is most likely TR and not TER1 as described previously. Interacts with the N-terminal part of TERT. Interacts with CBF5. Interacts with CTC1 and STN1. Does not interact with TEN1. Expressed in roots, rosette leaves, cauline leaves, stems and flowers.

The protein localises to the nucleus. It is found in the chromosome. Its subcellular location is the telomere. The protein resides in the nucleolus. It localises to the cytoplasm. Its function is as follows. Component of the telomerase ribonucleoprotein (RNP) complex that is essential for the positive regulation of telomere length. Binds RNA non-specifically. Binds specifically single-stranded telomeric DNA. Not required to recruit telomerase to telomeres, but stimulates TER1 RNP repeat addition processivity. The chain is Protection of telomeres protein 1a from Arabidopsis thaliana (Mouse-ear cress).